A 1161-amino-acid chain; its full sequence is Perforin-like protein 1 (1161 aa).

A helical transmembrane segment spans residues 67 to 86 (LWITFVCLLTLHMFGLSSAV). Residues 154–329 (PEALNEVPTK…LGDSSALDLF (176 aa)) form a disordered region. Basic and acidic residues-rich tracts occupy residues 162-177 (TKVERNEFTEKGDKTE) and 184-194 (ADHKSLLEGRS). The segment covering 201–211 (PDDDFDFLFED) has biased composition (acidic residues). A compositionally biased stretch (polar residues) spans 222 to 234 (NKGTSSDETSPGD). Residues 238–249 (GEGSSASDSLLS) are compositionally biased toward low complexity. Asn257 is a glycosylation site (N-linked (GlcNAc...) asparagine). Residues 264-283 (NQKRITHPKSKAQHQKKVTK) show a composition bias toward basic residues. Over residues 309 to 322 (NTQADDSQRQSLGD) the composition is skewed to polar residues. N-linked (GlcNAc...) asparagine glycosylation is present at Asn344. The segment at 353-381 (AANDGGLFSSSGMGPTGASDETSANPLGS) is disordered. The span at 361 to 378 (SSSGMGPTGASDETSANP) shows a compositional bias: polar residues. Positions 463–817 (LSAVYTKATK…LTPQDLSALT (355 aa)) constitute an MACPF domain. Cys539 and Cys602 are oxidised to a cystine. The N-linked (GlcNAc...) asparagine glycan is linked to Asn550. Residues 554-589 (YQNELSVDASLQGGDPIGLNSFSASTGYRDFAKEVS) traverse the membrane as a beta stranded segment. Asn618 is a glycosylation site (N-linked (GlcNAc...) asparagine). A disulfide bridge connects residues Cys643 and Cys657. A beta stranded transmembrane segment spans residues 694 to 740 (RSEVEKMRNMGIDVKTQLKMQLGGVSGGAGQGTSSKKNQSSSEYQMN). Residues 716-736 (GGVSGGAGQGTSSKKNQSSSE) form a disordered region. Asn755 carries an N-linked (GlcNAc...) asparagine glycan. Cystine bridges form between Cys845-Cys900, Cys874-Cys881, Cys928-Cys981, Cys957-Cys964, Cys1019-Cys1080, and Cys1047-Cys1054. 3 N-linked (GlcNAc...) asparagine glycosylation sites follow: Asn1022, Asn1050, and Asn1111. The interval 1094 to 1149 (VGKAKGNGKKKKGKKGKNKTNAPNEVEEGQQLGADSPSQVSVPADADSGPTSKTMS) is disordered. Residues 1099–1111 (GNGKKKKGKKGKN) are compositionally biased toward basic residues.

Belongs to the MPEG1 family. Homooligomer; forms a homooligomeric pore.

The protein localises to the parasitophorous vacuole membrane. Its subcellular location is the cytoplasmic vesicle. The protein resides in the secretory vesicle. It localises to the microneme membrane. Its function is as follows. Pore-forming protein that promotes parasite exit from host cells: mediates formation of a pore in the parasitophorous vacuolar membrane, leading to membrane permeabilization, thereby facilitating parasite egress from host cells. May also form a pore in the host plasma membrane. Preferentially binds inner leaflet lipids, such as phosphatidylethanolamine (PE) or phosphatidylserine (PS). The polypeptide is Perforin-like protein 1 (Toxoplasma gondii (strain ATCC 50861 / VEG)).